Reading from the N-terminus, the 51-residue chain is MRDKIKLESSAGTGHFYTTTKNKRTMPGKLEIKKFDPVARKHVVYKETKLK.

Residues 1–21 are disordered; it reads MRDKIKLESSAGTGHFYTTTK. Residues 10 to 20 are compositionally biased toward polar residues; sequence SAGTGHFYTTT.

It belongs to the bacterial ribosomal protein bL33 family.

The chain is Large ribosomal subunit protein bL33 (rpmG) from Neisseria meningitidis serogroup A / serotype 4A (strain DSM 15465 / Z2491).